We begin with the raw amino-acid sequence, 240 residues long: Putative S-adenosylmethionine-dependent methyltransferase RcsF (240 aa).

One can recognise a TsaA-like domain in the interval 5–142 (ISPIGHVRSC…YVPYADIVPD (138 aa)). S-adenosyl-L-methionine is bound by residues 22 to 24 (PRQ), 63 to 64 (HQ), Arg91, and 122 to 125 (LDGT).

It belongs to the tRNA methyltransferase O family.

The protein is Putative S-adenosylmethionine-dependent methyltransferase RcsF (rcsF) of Pseudomonas aeruginosa.